A 508-amino-acid chain; its full sequence is ATP synthase subunit alpha, mitochondrial (508 aa).

Glycine 171–threonine 178 contributes to the ATP binding site.

Belongs to the ATPase alpha/beta chains family. As to quaternary structure, F-type ATPases have 2 components, CF(1) - the catalytic core - and CF(0) - the membrane proton channel. CF(1) has five subunits: alpha(3), beta(3), gamma(1), delta(1), epsilon(1). CF(0) has three main subunits: a, b and c.

The protein resides in the mitochondrion. It is found in the mitochondrion inner membrane. Functionally, mitochondrial membrane ATP synthase (F(1)F(0) ATP synthase or Complex V) produces ATP from ADP in the presence of a proton gradient across the membrane which is generated by electron transport complexes of the respiratory chain. F-type ATPases consist of two structural domains, F(1) - containing the extramembraneous catalytic core, and F(0) - containing the membrane proton channel, linked together by a central stalk and a peripheral stalk. During catalysis, ATP synthesis in the catalytic domain of F(1) is coupled via a rotary mechanism of the central stalk subunits to proton translocation. Subunits alpha and beta form the catalytic core in F(1). Rotation of the central stalk against the surrounding alpha(3)beta(3) subunits leads to hydrolysis of ATP in three separate catalytic sites on the beta subunits. Subunit alpha does not bear the catalytic high-affinity ATP-binding sites. The protein is ATP synthase subunit alpha, mitochondrial (ATPA) of Zea mays (Maize).